The sequence spans 159 residues: E3 ubiquitin ligase complex SCF subunit sconC (159 aa).

The tract at residues 101-159 (ILAANYLDIKALLDVGCKTVANMIKGKSPEEIRKTFNIQNDFTPEEEDQIRRENEWAEE) is interaction with the F-box domain of F-box proteins.

This sequence belongs to the SKP1 family. Component of the SCF (SKP1-CUL1-F-box protein) E3 ubiquitin ligase complexes.

It participates in protein modification; protein ubiquitination. Functionally, essential component of the SCF (SKP1-CUL1-F-box protein) E3 ubiquitin ligase complexes, which mediate the ubiquitination and subsequent proteasomal degradation of target proteins. Controls sulfur metabolite repression, probably by mediating the inactivation or degradation of the metR transcription factor. This Aspergillus clavatus (strain ATCC 1007 / CBS 513.65 / DSM 816 / NCTC 3887 / NRRL 1 / QM 1276 / 107) protein is E3 ubiquitin ligase complex SCF subunit sconC (sconC).